Here is a 238-residue protein sequence, read N- to C-terminus: Endonuclease V (238 aa).

2 residues coordinate Mg(2+): aspartate 46 and aspartate 116.

The protein belongs to the endonuclease V family. It depends on Mg(2+) as a cofactor.

The protein resides in the cytoplasm. It catalyses the reaction Endonucleolytic cleavage at apurinic or apyrimidinic sites to products with a 5'-phosphate.. DNA repair enzyme involved in the repair of deaminated bases. Selectively cleaves double-stranded DNA at the second phosphodiester bond 3' to a deoxyinosine leaving behind the intact lesion on the nicked DNA. This is Endonuclease V from Bacillus subtilis (strain 168).